Reading from the N-terminus, the 314-residue chain is Probable UDP-sugar transporter protein SLC35A4 (314 aa).

Over 1 to 20 (MIAISADESPESSSPALRLR) the chain is Cytoplasmic. A helical membrane pass occupies residues 21–41 (WLFLLLLLVLIYGSHAPLLSL). At 42–54 (CKTQAQIPFSASS) the chain is on the lumenal side. Residues 55–75 (CVLLIETSKLFISFASLLASG) traverse the membrane as a helical segment. Residues 76 to 88 (SVSTLRISISMTT) are Cytoplasmic-facing. The chain crosses the membrane as a helical span at residues 89-109 (ASPYAVPAVLYAFNNHLVVFM). Residues 110–145 (QAYMDPSSFQVLSNLKIASTALLYTSCLGKRLHRRQ) lie on the Lumenal side of the membrane. The chain crosses the membrane as a helical span at residues 146–166 (WFAMGLLVSAGVSHSCFSYDL). The Cytoplasmic portion of the chain corresponds to 167–175 (EGKRETAVY). The chain crosses the membrane as a helical span at residues 176-196 (ITSWGLLLVLVYCFVSGLAAV). Residues 197–206 (YTERVLKSQR) lie on the Lumenal side of the membrane. Residues 207-227 (LPLSMQNLFLYTFGVVVNLAS) traverse the membrane as a helical segment. The Cytoplasmic portion of the chain corresponds to 228-242 (HLSGGEQKGFFEGYS). The helical transmembrane segment at 243-263 (AVVWVIVAGQVANGLLMSVVM) threads the bilayer. Over 264–267 (KHGT) the chain is Lumenal. Residues 268 to 290 (GITRLFVISSAMLVNAVLSWGIL) traverse the membrane as a helical segment. Topologically, residues 291-314 (GVQLTGYFLFPVVLIGWAVYLYYT) are cytoplasmic.

The protein belongs to the nucleotide-sugar transporter family. SLC35A subfamily.

The protein localises to the golgi apparatus membrane. The catalysed reaction is CDP-L-ribitol(in) + CDP(out) = CDP-L-ribitol(out) + CDP(in). Mediates the transport of CDP-ribitol. Does not exhibit CMP-sialic acid, UDP-galactose and UDP-N-acetylglucosamine transport activity. In Danio rerio (Zebrafish), this protein is Probable UDP-sugar transporter protein SLC35A4.